The chain runs to 219 residues: Transmembrane emp24 domain-containing protein 10 (219 aa).

An N-terminal signal peptide occupies residues 1–31 (MSGLFGPLSRPGPLPSAWLFLLLLGPSSVLG). Residues 1–142 (MSGLFGPLSR…KNYEEIAKVE (142 aa)) are required for interaction with STX17. Topologically, residues 32-185 (ISFHLPVNSR…RDTNESTNTR (154 aa)) are lumenal. In terms of domain architecture, GOLD spans 41–193 (RKCLREEIHK…TRVLYFSIFS (153 aa)). The interval 147–178 (LEVELRRLEDLSESIVNDFAYMKKREEEMRDT) is required for TMED10 and TMED2 cis-Golgi network localization. Arginine 171 and arginine 176 each carry dimethylated arginine. An N-linked (GlcNAc...) asparagine glycan is attached at asparagine 179. Residues 186 to 206 (VLYFSIFSMFCLIGLATWQVF) form a helical membrane-spanning segment. Residues 204–219 (QVFYLRRFFKAKKLIE) are interaction with COPG1. Topologically, residues 207-219 (YLRRFFKAKKLIE) are cytoplasmic. The segment at 207–219 (YLRRFFKAKKLIE) is interaction with ARF1 and IL1B. Positions 211-212 (FF) match the COPII vesicle coat-binding motif. Residues 211-219 (FFKAKKLIE) carry the COPI vesicle coat-binding motif.

This sequence belongs to the EMP24/GP25L family. As to quaternary structure, predominantly dimeric and to a lesser extent monomeric in the ER. Monomer and dimer in ERGIC and cis-Golgi network. Forms homooligomer (via GOLD domain); the assembly is promoted by direct binding with leaderless cargos and may form a protein channel that facilitates cargo entry into the ERGIC. Forms heterooligomeric complexes with other members of the p24 family such as TMED2, TMED7 and TMED9. Interacts (via GOLD domain) with TMED2 (via GOLD domain); the complex is required for export of TMED10 from the ER to the cis-Golgi network; the complex is proposed to be involved in cis-Golgi network dynamics and / or biogenesis. Associates with the COPI vesicle coat subunits (coatomer). Tetramerization of the cytoplasmic domain at the Golgi membrane in vitro; the complex is proposed to interact with COPI coatomer and induce budding of the vesicles. Interacts with COPG1; the interaction involves TMED10 homodimer. Interacts with ARF1 (GDP-bound); the interaction probably involves a TMED10 oligomer. Interacts with SEC23A, SEC24B, SEC24C and SEC24D components of the coat protein complex II/COPII, indicative of an association of TMED10 with the COPII vesicle coat. Interacts with CD59. Interacts with MPPE1/PGAP5; the complex might recruit and sort GPI-anchored proteins to the ER-exit site, or the interaction might lead to recycling of PGAP5 between the ER and the Golgi. Interacts with F2LR1/PAR2. Interacts with KDELR2/ERD2; the interaction is disrupted by KDELR2 ligand. Found in a complex composed at least of SURF4, TMED2 and TMED10. Associates with the presenilin-dependent gamma-secretase complex. Interacts with STX17; the interaction is direct. Interacts with IL-1; the interaction is direct. Interacts with RAB21 (active GTP-bound form); the interaction is indirect and regulates TMED10 abundance and localization at the Golgi.

Its subcellular location is the endoplasmic reticulum membrane. It is found in the endoplasmic reticulum-Golgi intermediate compartment membrane. It localises to the golgi apparatus membrane. The protein localises to the golgi apparatus. The protein resides in the cis-Golgi network membrane. Its subcellular location is the trans-Golgi network membrane. It is found in the cytoplasmic vesicle. It localises to the secretory vesicle membrane. The protein localises to the cell membrane. The protein resides in the melanosome. Its function is as follows. Cargo receptor involved in protein vesicular trafficking and quality control in the endoplasmic reticulum (ER) and Golgi. The p24 protein family is a group of transmembrane proteins that bind coat protein complex I/COPI and coat protein complex II/COPII involved in vesicular trafficking between the membranes. Acts at the lumenal side for incorporation of secretory cargo molecules into transport vesicles and involved in vesicle coat formation at the cytoplasmic side. Mainly functions in the early secretory pathway and cycles between the ER, ER-Golgi intermediate compartment (ERGIC) and Golgi, mediating cargo transport through COPI and COPII-coated vesicles. In COPII vesicle-mediated anterograde transport, involved in the transport of GPI-anchored proteins by acting together with TMED2 as their cargo receptor; the function specifically implies SEC24C and SEC24D of the COPII vesicle coat and lipid raft-like microdomains of the ER. Recognizes GPI anchors structural remodeled in the ER by the GPI inositol-deacylase/PGAP1 and the metallophosphoesterase MPPE1/PGAP5. In COPI vesicle-mediated retrograde transport, involved in the biogenesis of COPI vesicles and vesicle coat recruitment. Involved in trafficking of amyloid beta A4 protein and soluble APP-beta release (independent from the modulation of gamma-secretase activity). Involved in the KDELR2-mediated retrograde transport of the toxin A subunit (CTX-A-K63)together with COPI and the COOH terminus of KDELR2. On Golgi membranes, acts as a primary receptor for ARF1-GDP, a GTP-binding protein involved in COPI-vesicle formation. Increases coatomer-dependent GTPase-activating activity of ARFGAP2 which mediates the hydrolysis of ARF1-bound GTP and therefore modulates protein trafficking from the Golgi apparatus. Involved in the exocytic trafficking of G protein-coupled receptors F2LR1/PAR2 (trypsin and tryspin-like enzyme receptor), OPRM1 (opioid receptor) and P2RY4 (UTD and UDP receptor) from the Golgi to the plasma membrane, thus contributing to receptor resensitization. In addition to its cargo receptor activity, may also act as a protein channel after oligomerization, facilitating the post-translational entry of leaderless cytoplasmic cargo into the ERGIC. Involved in the translocation into ERGIC, the vesicle entry and the secretion of leaderless cargos (lacking the secretion signal sequence), including the mature form of interleukin 1/IL-1 family members, the alpha-crystallin B chain HSPB5, the carbohydrate-binding proteins galectin-1/LGALS1 and galectin-3/LGALS3, the microtubule-associated protein Tau/MAPT, and the annexin A1/ANXA1; the translocation process is dependent on cargo protein unfolding and enhanced by chaperones HSP90AB1 and HSP90B1/GRP9. Could also associates with the presenilin-dependent gamma-secretase complex in order to regulate gamma-cleavages of the amyloid beta A4 protein to yield amyloid-beta 40/Abeta40. The polypeptide is Transmembrane emp24 domain-containing protein 10 (Mus musculus (Mouse)).